The sequence spans 398 residues: Protein trichome birefringence-like 45 (398 aa).

The chain crosses the membrane as a helical; Signal-anchor for type II membrane protein span at residues 1-21; the sequence is MAAVQCLTFLFLFLLQNATSA. The GDS motif motif lies at 131–133; sequence GDS. The short motif at 375-389 is the DCXHWCLPGXXDXWN motif element; it reads DCSHWCLPGLPDTWN.

Belongs to the PC-esterase family. TBL subfamily.

The protein localises to the membrane. Its function is as follows. May act as a bridging protein that binds pectin and other cell wall polysaccharides. Probably involved in maintaining esterification of pectins. May be involved in the specific O-acetylation of cell wall polymers. In Arabidopsis thaliana (Mouse-ear cress), this protein is Protein trichome birefringence-like 45 (TBL45).